The primary structure comprises 273 residues: Homeobox protein Nkx-2.2 (273 aa).

Disordered stretches follow at residues 1–56 (MSLT…LDAV) and 91–131 (AASA…KRKR). Acidic residues predominate over residues 20–38 (DTNDEDGSVAEGPEEESEG). The segment at residues 128–187 (KRKRRVLFSKAQTYELERRFRQQRYLSAPEREHLASLIRLTPTQVKIWFQNHRYKMKRAR) is a DNA-binding region (homeobox).

Belongs to the NK-2 homeobox family. As to quaternary structure, interacts with OLIG2. In terms of tissue distribution, expressed in restricted areas of the developing CNS: the hindbrain and forebrain, and pancreas.

The protein localises to the nucleus. Functionally, transcriptional activator involved in the development of insulin-producting beta cells in the endocrine pancreas. May also be involved in specifying diencephalic neuromeric boundaries, and in controlling the expression of genes that play a role in axonal guidance. Binds to elements within the NEUROD1 promoter. The protein is Homeobox protein Nkx-2.2 (Nkx2-2) of Mus musculus (Mouse).